The primary structure comprises 208 residues: GATA transcription factor 20 (208 aa).

The GATA-type zinc finger occupies 94–119 (CASCDTTSTPLWRNGPKGPKSLCNAC).

It belongs to the type IV zinc-finger family. Class B subfamily.

Its subcellular location is the nucleus. Functionally, transcriptional regulator that specifically binds 5'-GATA-3' or 5'-GAT-3' motifs within gene promoters. This chain is GATA transcription factor 20, found in Arabidopsis thaliana (Mouse-ear cress).